The sequence spans 223 residues: MDLASLRAQQIELASSVCREDRLDKDPPAFIGGADVGFEQGGEVTRAAMVLLKYPSLELVEYKVARIATTMPYIPGFLSFREYPALLAAWEQLSQKPDLLFVDGHGISHPRRLGVASHFGLLVDVPTIGVAKKRLCGKFEPLSTEPGALSPLMDKGEQLAWVWRSKARCNPLFIATGHRVSTDSALAWVQRCMKGYRLPEPTRWADAVASGRPAFIRWQEIQR.

Residues Asp-35 and Asp-103 each contribute to the Mg(2+) site.

Belongs to the endonuclease V family. Requires Mg(2+) as cofactor.

The protein localises to the cytoplasm. The enzyme catalyses Endonucleolytic cleavage at apurinic or apyrimidinic sites to products with a 5'-phosphate.. Functionally, DNA repair enzyme involved in the repair of deaminated bases. Selectively cleaves double-stranded DNA at the second phosphodiester bond 3' to a deoxyinosine leaving behind the intact lesion on the nicked DNA. The polypeptide is Endonuclease V (Salmonella schwarzengrund (strain CVM19633)).